A 245-amino-acid polypeptide reads, in one-letter code: Sugar fermentation stimulation protein homolog (245 aa).

The protein belongs to the SfsA family.

This chain is Sugar fermentation stimulation protein homolog, found in Yersinia pseudotuberculosis serotype I (strain IP32953).